A 405-amino-acid chain; its full sequence is Bone morphogenetic protein 4 (405 aa).

A signal peptide spans 1–19; sequence MIPGNRMLMVILLCQVLLG. Residues 20–291 constitute a propeptide that is removed on maturation; that stretch reads GTNHASLIPE…GHALTRRARR (272 aa). Asparagine 144, asparagine 208, asparagine 347, and asparagine 362 each carry an N-linked (GlcNAc...) asparagine glycan. Cystine bridges form between cysteine 305-cysteine 370, cysteine 334-cysteine 402, and cysteine 338-cysteine 404.

Belongs to the TGF-beta family. As to quaternary structure, homodimer; disulfide-linked. Part of a complex consisting of TWSG1 and CHRD. Forms a ternary complex with chordin/CHRD and TSKU.

Its subcellular location is the secreted. Negatively regulates the structure and function of the limb apical ectodermal ridge. In Gallus gallus (Chicken), this protein is Bone morphogenetic protein 4 (BMP4).